Reading from the N-terminus, the 119-residue chain is uncharacterized protein (119 aa).

Cysteines 9 and 12 form a disulfide.

The protein belongs to the ArsC family.

This is an uncharacterized protein from Streptomyces viridochromogenes.